The primary structure comprises 201 residues: Anthranilate synthase component 2 (201 aa).

A Glutamine amidotransferase type-1 domain is found at methionine 1 to glutamate 199. Glycine 52 to cysteine 54 contacts L-glutamine. Cysteine 79 acts as the Nucleophile; for GATase activity in catalysis. L-glutamine-binding positions include glutamine 83 and serine 129–leucine 130. Active-site for GATase activity residues include histidine 173 and glutamate 175.

As to quaternary structure, heterotetramer consisting of two non-identical subunits: a beta subunit (TrpG) and a large alpha subunit (TrpE).

The enzyme catalyses chorismate + L-glutamine = anthranilate + pyruvate + L-glutamate + H(+). It functions in the pathway amino-acid biosynthesis; L-tryptophan biosynthesis; L-tryptophan from chorismate: step 1/5. Its function is as follows. Part of a heterotetrameric complex that catalyzes the two-step biosynthesis of anthranilate, an intermediate in the biosynthesis of L-tryptophan. In the first step, the glutamine-binding beta subunit (TrpG) of anthranilate synthase (AS) provides the glutamine amidotransferase activity which generates ammonia as a substrate that, along with chorismate, is used in the second step, catalyzed by the large alpha subunit of AS (TrpE) to produce anthranilate. In the absence of TrpG, TrpE can synthesize anthranilate directly from chorismate and high concentrations of ammonia. This chain is Anthranilate synthase component 2, found in Pseudomonas aeruginosa (strain ATCC 15692 / DSM 22644 / CIP 104116 / JCM 14847 / LMG 12228 / 1C / PRS 101 / PAO1).